We begin with the raw amino-acid sequence, 274 residues long: Glucosamine-6-phosphate deaminase (274 aa).

The active-site Proton acceptor; for enolization step is Asp71. Residue Asp140 is the For ring-opening step of the active site. His142 (proton acceptor; for ring-opening step) is an active-site residue. Glu147 acts as the For ring-opening step in catalysis.

This sequence belongs to the glucosamine/galactosamine-6-phosphate isomerase family. NagB subfamily.

It catalyses the reaction alpha-D-glucosamine 6-phosphate + H2O = beta-D-fructose 6-phosphate + NH4(+). It functions in the pathway amino-sugar metabolism; N-acetylneuraminate degradation; D-fructose 6-phosphate from N-acetylneuraminate: step 5/5. Catalyzes the reversible isomerization-deamination of glucosamine 6-phosphate (GlcN6P) to form fructose 6-phosphate (Fru6P) and ammonium ion. This chain is Glucosamine-6-phosphate deaminase, found in Fusobacterium nucleatum subsp. nucleatum (strain ATCC 25586 / DSM 15643 / BCRC 10681 / CIP 101130 / JCM 8532 / KCTC 2640 / LMG 13131 / VPI 4355).